Reading from the N-terminus, the 403-residue chain is Tyrosine--tRNA ligase (403 aa).

Positions 42 to 51 match the 'HIGH' region motif; that stretch reads PTAPDLHLGH. The 'KMSKS' region motif lies at 226 to 230; that stretch reads KMSKS. Lys-229 lines the ATP pocket. Residues 339–400 enclose the S4 RNA-binding domain; the sequence is LRLAGLLTAA…GKRNFARVLL (62 aa).

It belongs to the class-I aminoacyl-tRNA synthetase family. TyrS type 2 subfamily. In terms of assembly, homodimer.

The protein localises to the cytoplasm. The catalysed reaction is tRNA(Tyr) + L-tyrosine + ATP = L-tyrosyl-tRNA(Tyr) + AMP + diphosphate + H(+). Its function is as follows. Catalyzes the attachment of tyrosine to tRNA(Tyr) in a two-step reaction: tyrosine is first activated by ATP to form Tyr-AMP and then transferred to the acceptor end of tRNA(Tyr). In Xanthomonas euvesicatoria pv. vesicatoria (strain 85-10) (Xanthomonas campestris pv. vesicatoria), this protein is Tyrosine--tRNA ligase.